The primary structure comprises 213 residues: Ribonuclease HII (213 aa).

Residues 20–209 (ELVAGVDEVG…VRQAYEALEG (190 aa)) form the RNase H type-2 domain. A divalent metal cation is bound by residues Asp-26, Glu-27, and Asp-118.

Belongs to the RNase HII family. Mn(2+) is required as a cofactor. Requires Mg(2+) as cofactor.

Its subcellular location is the cytoplasm. The catalysed reaction is Endonucleolytic cleavage to 5'-phosphomonoester.. Its function is as follows. Endonuclease that specifically degrades the RNA of RNA-DNA hybrids. The chain is Ribonuclease HII from Pseudomonas fluorescens (strain Pf0-1).